We begin with the raw amino-acid sequence, 347 residues long: N-acetyl-gamma-glutamyl-phosphate reductase (347 aa).

Cysteine 150 is an active-site residue.

It belongs to the NAGSA dehydrogenase family. Type 1 subfamily.

Its subcellular location is the cytoplasm. It catalyses the reaction N-acetyl-L-glutamate 5-semialdehyde + phosphate + NADP(+) = N-acetyl-L-glutamyl 5-phosphate + NADPH + H(+). Its pathway is amino-acid biosynthesis; L-arginine biosynthesis; N(2)-acetyl-L-ornithine from L-glutamate: step 3/4. Its function is as follows. Catalyzes the NADPH-dependent reduction of N-acetyl-5-glutamyl phosphate to yield N-acetyl-L-glutamate 5-semialdehyde. The protein is N-acetyl-gamma-glutamyl-phosphate reductase of Leifsonia xyli subsp. xyli (strain CTCB07).